A 270-amino-acid polypeptide reads, in one-letter code: Phosphodiesterase YaeI (270 aa).

Residues Asp-56, His-58, Asp-88, Asn-120, His-209, and His-211 each coordinate a divalent metal cation.

Belongs to the metallophosphoesterase superfamily. Requires a divalent metal cation as cofactor.

Functionally, shows phosphodiesterase activity, hydrolyzing phosphodiester bond in the artificial chromogenic substrate bis-p-nitrophenyl phosphate (bis-pNPP). The polypeptide is Phosphodiesterase YaeI (yaeI) (Escherichia coli (strain K12)).